The chain runs to 148 residues: Angiogenin-1 (148 aa).

An N-terminal signal peptide occupies residues 1-23 (MVMVLSPLLLVFILGLGLTPVAP). The active-site Proton acceptor is the H37. R45 serves as a coordination point for tRNA. Cystine bridges form between C50–C105, C63–C116, and C81–C131. The Nucleolar localization signal motif lies at 55-59 (KNRRL). Positions 105 and 127 each coordinate tRNA. H138 serves as the catalytic Proton donor.

The protein belongs to the pancreatic ribonuclease family. In terms of assembly, homodimer. Interacts with RNH1; inhibiting ANG ribonuclease activity. Serum and milk.

The protein localises to the secreted. It is found in the nucleus. It localises to the nucleolus. Its subcellular location is the cytoplasm. The protein resides in the stress granule. Secreted ribonuclease that can either promote or restrict cell proliferation of target cells, depending on the context. Endocytosed in target cells via its receptor PLXNB2 and translocates to the cytoplasm or nucleus. Under stress conditions, localizes to the cytoplasm and promotes the assembly of stress granules (SGs): specifically cleaves a subset of tRNAs within anticodon loops to produce tRNA-derived stress-induced fragments (tiRNAs), resulting in translation repression and inhibition of cell proliferation. tiRNas also prevent formation of apoptosome, thereby promoting cell survival. Preferentially cleaves RNAs between a pyrimidine and an adenosine residue, suggesting that it cleaves the anticodon loop of tRNA(Ala) (32-UUAGCAU-38) after positions 33 and 36. Cleaves a subset of tRNAs, including tRNA(Ala), tRNA(Glu), tRNA(Gly), tRNA(Lys), tRNA(Val), tRNA(His), tRNA(Asp) and tRNA(Sec). Under growth conditions and in differentiated cells, translocates to the nucleus and stimulates ribosomal RNA (rRNA) transcription, including that containing the initiation site sequences of 45S rRNA, thereby promoting cell growth and proliferation. Angiogenin induces vascularization of normal and malignant tissues via its ability to promote rRNA transcription. The chain is Angiogenin-1 (ANG1) from Bos taurus (Bovine).